The primary structure comprises 131 residues: D-ribose pyranase (131 aa).

His20 (proton donor) is an active-site residue. Substrate is bound by residues Asp28, His98, and 120-122; that span reads YAN.

This sequence belongs to the RbsD / FucU family. RbsD subfamily. In terms of assembly, homodecamer.

The protein localises to the cytoplasm. The catalysed reaction is beta-D-ribopyranose = beta-D-ribofuranose. It functions in the pathway carbohydrate metabolism; D-ribose degradation; D-ribose 5-phosphate from beta-D-ribopyranose: step 1/2. Catalyzes the interconversion of beta-pyran and beta-furan forms of D-ribose. The chain is D-ribose pyranase from Clostridium perfringens (strain SM101 / Type A).